A 185-amino-acid polypeptide reads, in one-letter code: Endoribonuclease YbeY (185 aa).

Zn(2+)-binding residues include histidine 142, histidine 146, and histidine 152.

This sequence belongs to the endoribonuclease YbeY family. It depends on Zn(2+) as a cofactor.

Its subcellular location is the cytoplasm. Functionally, single strand-specific metallo-endoribonuclease involved in late-stage 70S ribosome quality control and in maturation of the 3' terminus of the 16S rRNA. This Parvibaculum lavamentivorans (strain DS-1 / DSM 13023 / NCIMB 13966) protein is Endoribonuclease YbeY.